The following is a 529-amino-acid chain: MSPSEYALEVAKRRTFAIISHPDAGKTTITEKVLLFGHAIQTAGTVKGRGSSHHAKSDWMEMEKQRGISITTSVMQFPYGGCLVNLLDTPGHEDFSEDTYRTLTAVDCCLMVIDAAKGVEDRTRKLMEVTRLRDTPILTFMNKLDREIRDPMEVLDEVERELNIACSPITWPIGCGKSFKGVYHLHKDETYLYQSGKGHTIQEVRIVKGLNNPDLDVAVGEDLAKQFRQELELVQGASHEFDHEAFLSGDLTPVFFGTALGNFGVDHMLDGLVEWAPAPMPRKTDTRVVVASEEKFTGFVFKIQANMDPKHRDRVAFMRVVSGRFEKGMKLRQVRTKKDVVISDALTFMAGDRSHVEEAYAGDIIGLHNHGTIQIGDTFTQGEDMKFTGIPNFAPELFRRIRLRDPLKQKQLLKGLVQLSEEGAVQVFRPLSNNDLIVGAVGVLQFEVVSSRLKSEYNVEAVYESVNVSTARWVECNDVKKFEEFKRKNELNLALDGGDNLSYIAPTMVNLNITQERYPDVIFRKTREH.

Residues 11 to 280 (AKRRTFAIIS…GLVEWAPAPM (270 aa)) form the tr-type G domain. GTP contacts are provided by residues 20 to 27 (SHPDAGKT), 88 to 92 (DTPGH), and 142 to 145 (NKLD).

It belongs to the TRAFAC class translation factor GTPase superfamily. Classic translation factor GTPase family. PrfC subfamily.

It localises to the cytoplasm. Its function is as follows. Increases the formation of ribosomal termination complexes and stimulates activities of RF-1 and RF-2. It binds guanine nucleotides and has strong preference for UGA stop codons. It may interact directly with the ribosome. The stimulation of RF-1 and RF-2 is significantly reduced by GTP and GDP, but not by GMP. This Yersinia pseudotuberculosis serotype O:1b (strain IP 31758) protein is Peptide chain release factor 3.